The sequence spans 673 residues: UvrABC system protein B (673 aa).

The 158-residue stretch at 26 to 183 (EGLEDGLAHQ…RRLAELQYTR (158 aa)) folds into the Helicase ATP-binding domain. Residue 39–46 (GVTGSGKT) coordinates ATP. The Beta-hairpin signature appears at 92-115 (YYDYYQPEAYVPSSDTFIEKDASV). Residues 431–597 (QVDDLLSEIR…GLNKKVVDIL (167 aa)) enclose the Helicase C-terminal domain. The segment at 608–627 (AKGRGKSRPIVEPDNVPMDM) is disordered. Residues 633–668 (QQKIHELEGLMMQHAQNLEFEEAAQIRDQLHQLREL) form the UVR domain.

Belongs to the UvrB family. In terms of assembly, forms a heterotetramer with UvrA during the search for lesions. Interacts with UvrC in an incision complex.

Its subcellular location is the cytoplasm. The UvrABC repair system catalyzes the recognition and processing of DNA lesions. A damage recognition complex composed of 2 UvrA and 2 UvrB subunits scans DNA for abnormalities. Upon binding of the UvrA(2)B(2) complex to a putative damaged site, the DNA wraps around one UvrB monomer. DNA wrap is dependent on ATP binding by UvrB and probably causes local melting of the DNA helix, facilitating insertion of UvrB beta-hairpin between the DNA strands. Then UvrB probes one DNA strand for the presence of a lesion. If a lesion is found the UvrA subunits dissociate and the UvrB-DNA preincision complex is formed. This complex is subsequently bound by UvrC and the second UvrB is released. If no lesion is found, the DNA wraps around the other UvrB subunit that will check the other stand for damage. This Escherichia fergusonii (strain ATCC 35469 / DSM 13698 / CCUG 18766 / IAM 14443 / JCM 21226 / LMG 7866 / NBRC 102419 / NCTC 12128 / CDC 0568-73) protein is UvrABC system protein B.